A 357-amino-acid polypeptide reads, in one-letter code: Adenylate isopentenyltransferase 1, chloroplastic (357 aa).

The transit peptide at 1 to 71 (MTELNFHLLP…NRKDKVVVIL (71 aa)) directs the protein to the chloroplast. Residues 20–39 (TTTSPSFSSHSSSSSSLLSF) show a composition bias toward low complexity. Residues 20-58 (TTTSPSFSSHSSSSSSLLSFTKRRRKHQPLVSSIRMEQS) form a disordered region. Residue 72–79 (GATGAGKS) participates in ATP binding.

This sequence belongs to the IPP transferase family. As to expression, expressed in the vascular stele of the roots, in the xylem precursor cell files in the root tip, in leaf axils, ovules, and immature seeds.

The protein localises to the plastid. It is found in the chloroplast. It carries out the reaction dimethylallyl diphosphate + AMP = N(6)-(dimethylallyl)adenosine 5'-phosphate + diphosphate. It catalyses the reaction dimethylallyl diphosphate + ADP = N(6)-(dimethylallyl)adenosine 5'-diphosphate + diphosphate. The enzyme catalyses dimethylallyl diphosphate + ATP = N(6)-(dimethylallyl)adenosine 5'-triphosphate + diphosphate. Involved in cytokinin biosynthesis. Catalyzes the transfer of an isopentenyl group from dimethylallyl diphosphate (DMAPP) to ATP, ADP and AMP. Adenine, adenosine, isopentenylpyrophosphate and 1-hydroxy-2-methyl-2-(E)-butenyl 4-diphosphate (HMBDP) are not used as substrates. The chain is Adenylate isopentenyltransferase 1, chloroplastic (IPT1) from Arabidopsis thaliana (Mouse-ear cress).